We begin with the raw amino-acid sequence, 579 residues long: MSRDFKPGDLIFAKMKGYPHWPARVDEVPDGAVKPPTNKMPIFFFGTHETAFLGPKDIFPYSENKDKYGKPNKRKGFNEGLWEIDNNPKVKFSHQPSHPAVNTSIKETIQESSPEAAEGSEEKSGAKRRKPSIPKLPPKGDNNSPAEAEAEEKEMHSTKEDEEPSEKNSKEGVVKTNDASIPKVARRGRKRKAEKQAESEEAAVVATAAVVAAAAAPVTVSPKVSPKRGRPAVSEVKVPKPRGRPKLVKPSCLSESDPVNEEEKAKKKGPDEKPKKQGKKDEEGQKEEEKPKKEYDKKDGKKEAEPKRKNAAKLGSASASDSEDEGGEEEGDKKKKGGRSFQSTHRRNIMRGQHEKEVTERKRKQEEQGESELQNKEEGKKTEVKKMEKKRETSMDSRLQRIHAEIKNSLKIDNLDVNRCIEALDELASLQVSMQQAQKHTEMILTLKKIRKFKVSQVIMEKSTMLYNKFKTMFLVGEGDSVLSQVLNKSLAEQKQHEEANKTKEQWKKGTNKKNEKEKDQTGSKIVNGGSETQDTNQSQHNGENAEEKDKLEVASKKKTCGEESELEKPAKESAFENK.

The PWWP domain maps to 1–64 (MSRDFKPGDL…PKDIFPYSEN (64 aa)). Disordered stretches follow at residues 62–81 (SENKDKYGKPNKRKGFNEGL), 88–203 (PKVK…EEAA), 215–397 (AAPV…SMDS), and 492–579 (AEQK…FENK). Residues 94-107 (HQPSHPAVNTSIKE) show a composition bias toward polar residues. Over residues 153–173 (KEMHSTKEDEEPSEKNSKEGV) the composition is skewed to basic and acidic residues. A compositionally biased stretch (basic residues) spans 184 to 193 (VARRGRKRKA). The short motif at 186 to 196 (RRGRKRKAEKQ) is the Nuclear localization signal element. The segment covering 215 to 224 (AAPVTVSPKV) has biased composition (low complexity). A compositionally biased stretch (basic and acidic residues) spans 261–308 (EEEKAKKKGPDEKPKKQGKKDEEGQKEEEKPKKEYDKKDGKKEAEPKR). Residues 321–330 (DSEDEGGEEE) show a composition bias toward acidic residues. Residues 334–349 (KKKGGRSFQSTHRRNI) are compositionally biased toward basic residues. A coiled-coil region spans residues 347-442 (RNIMRGQHEK…SMQQAQKHTE (96 aa)). Basic and acidic residues-rich tracts occupy residues 352–397 (GQHE…SMDS) and 492–522 (AEQKQHEEANKTKEQWKKGTNKKNEKEKDQT). An integrase-binding domain (IBD) region spans residues 387 to 464 (MEKKRETSMD…VSQVIMEKST (78 aa)). Residues 530–543 (GSETQDTNQSQHNG) show a composition bias toward polar residues. Basic and acidic residues predominate over residues 544 to 579 (ENAEEKDKLEVASKKKTCGEESELEKPAKESAFENK).

The protein belongs to the HDGF family.

Its subcellular location is the nucleus. In terms of biological role, transcriptional coactivator involved in neuroepithelial stem cell differentiation and neurogenesis. Involved in particular in lens epithelial cell gene regulation and stress responses. May play an important role in lens epithelial to fiber cell terminal differentiation. May play a protective role during stress-induced apoptosis. The sequence is that of Lens epithelium-derived growth factor (PSIP1) from Gallus gallus (Chicken).